The sequence spans 1687 residues: Protein TOPAZ1 (1687 aa).

Disordered stretches follow at residues 1–132 (MRRP…PGFD), 596–632 (LSRS…GNLT), and 938–969 (ASEI…GDFS). Over residues 31–41 (GAAGGCGPEAG) the composition is skewed to gly residues. The segment covering 80-113 (RRVEGRRGQVSPSDRRGLEAAKEAEFPLQTERHT) has biased composition (basic and acidic residues). 2 stretches are compositionally biased toward polar residues: residues 598 to 622 (RSGS…SLTG) and 948 to 963 (ANTS…SENE).

It is found in the cytoplasm. The protein localises to the cytosol. Its function is as follows. Important for normal spermatogenesis and male fertility. Specifically required for progression to the post-meiotic stages of spermatocyte development. Seems to be necessary for normal expression levels of a number of testis-expressed gene transcripts, although its role in this process is unclear. In Macaca mulatta (Rhesus macaque), this protein is Protein TOPAZ1 (TOPAZ1).